The chain runs to 262 residues: Phycoerythrobilin:ferredoxin oxidoreductase (262 aa).

The protein belongs to the HY2 family.

It catalyses the reaction (3Z)-phycoerythrobilin + oxidized 2[4Fe-4S]-[ferredoxin] = 15,16-dihydrobiliverdin + reduced 2[4Fe-4S]-[ferredoxin] + 2 H(+). Catalyzes the two-electron reduction of the C2 and C3(1) diene system of 15,16-dihydrobiliverdin. This chain is Phycoerythrobilin:ferredoxin oxidoreductase, found in Synechococcus sp. (strain RCC307).